The chain runs to 442 residues: DMATS-type prenyltransferase mfmD (442 aa).

This sequence belongs to the tryptophan dimethylallyltransferase family.

It functions in the pathway secondary metabolite biosynthesis; terpenoid biosynthesis. Its function is as follows. Prenyltransferase; part of the gene cluster that mediates the biosynthesis of the phthalide-terpenoid hybrid 11'-O-desmethylfendlerol. Within the pathway, mfmD is responsible for farnesylation of the cyclopolic acid intermediate via an O-prenylation reaction. The biosynthesis of 11'-O-desmethylfendlerol begins with the NR-PKS mfmB that forms 3,5-dimethylorsellinic acid (DMOA), which is then transformed into the phthalide 5,7-dihydroxy-4-(hydroxymethyl)-6-methylphthalide by the cytochrome P450 monooxygenase mfmA and the hydrolase mfmC. Subsequently, the methyltransferase mfmE catalyzes 7-O-methylation to yield 5-hydroxy-4-(hydroxymethyl)-7-methoxy-6-methylphthalide, which undergoes C-3 hydroxylation by the cytochrome P450 monooxygenase mfmF. The resultant cyclopolic acid (2,5-dihydroxy-4-(hydroxymethyl)-7-methoxy-6-methylphthalide) is then farnesylated by the DMATS-type prenyltransferase mfmD to afford 5-O-farnesylcyclopolic acid. Finally, the Pyr4-family terpene cyclase mfmH cyclizes the farnesyl moiety of 5-O-farnesylcyclopolic acid into a drimane-like structure, thus completing the biosynthesis of 11'-O-desmethylfendlerol. The protein is DMATS-type prenyltransferase mfmD of Annulohypoxylon moriforme (Filamentous fungus).